Here is a 292-residue protein sequence, read N- to C-terminus: Nucleophosmin (292 aa).

Met1 is subject to N-acetylmethionine. A necessary for interaction with APEX1 region spans residues 1–117; the sequence is MEDSMDMDMS…PVHISGQHLV (117 aa). Residues 1 to 185 are required for interaction with SENP3; that stretch reads MEDSMDMDMS…DDDDFDEEET (185 aa). Ser4 carries the phosphoserine; by PLK1 and PLK2 modification. The residue at position 10 (Ser10) is a Phosphoserine. Lys27 participates in a covalent cross-link: Glycyl lysine isopeptide (Lys-Gly) (interchain with G-Cter in SUMO2). Position 32 is an N6-acetyllysine; alternate (Lys32). A Glycyl lysine isopeptide (Lys-Gly) (interchain with G-Cter in SUMO1); alternate cross-link involves residue Lys32. Lys32 is covalently cross-linked (Glycyl lysine isopeptide (Lys-Gly) (interchain with G-Cter in SUMO2); alternate). Ser43 carries the post-translational modification Phosphoserine. A Phosphotyrosine modification is found at Tyr67. At Ser70 the chain carries Phosphoserine. Thr75 and Thr95 each carry phosphothreonine. Phosphoserine is present on residues Ser125 and Ser139. Positions 138 to 248 are disordered; that stretch reads MSGKRSAPGG…PSSVEDIKAK (111 aa). Residue Lys141 forms a Glycyl lysine isopeptide (Lys-Gly) (interchain with G-Cter in SUMO2) linkage. Lys150 carries the N6-acetyllysine; alternate modification. A Glycyl lysine isopeptide (Lys-Gly) (interchain with G-Cter in SUMO2); alternate cross-link involves residue Lys150. The Nuclear localization signal motif lies at 152–157; that stretch reads PQKKVK. Lys154 bears the N6-acetyllysine mark. Positions 159 to 186 are enriched in acidic residues; the sequence is DEDDEDDDEDDEDDEDDDDDDFDEEETE. The tract at residues 186–214 is interaction with NOP2; that stretch reads EEKVPVKKSVRDTPAKNAQKSNQNGKDLK. Residues 187–199 show a composition bias toward basic and acidic residues; the sequence is EKVPVKKSVRDTP. The Nuclear localization signal motif lies at 190–196; that stretch reads PVKKSVR. A Phosphothreonine; by CDK1 and CDK2 modification is found at Thr198. Positions 201 to 210 are enriched in polar residues; sequence KNAQKSNQNG. The residue at position 206 (Ser206) is an ADP-ribosylserine. Residue Lys211 is modified to N6-acetyllysine. Lys214 participates in a covalent cross-link: Glycyl lysine isopeptide (Lys-Gly) (interchain with G-Cter in SUMO2). Thr217 carries the post-translational modification Phosphothreonine; by CDK1. A compositionally biased stretch (basic and acidic residues) spans 221–233; sequence KGQESFKKQEKTP. Ser225 carries the phosphoserine modification. Lys227 is modified (N6-acetyllysine). Lys228 carries the post-translational modification N6-acetyllysine; alternate. A Glycyl lysine isopeptide (Lys-Gly) (interchain with G-Cter in SUMO); alternate cross-link involves residue Lys228. Residues Thr232 and Thr235 each carry the phosphothreonine; by CDK1 modification. Ser240 and Ser241 each carry phosphoserine. The segment at 241 to 292 is required for nucleolar localization; the sequence is SVEDIKAKMQASIEKGGSLPKVEAKFINYVKNCFRMTDQEAIQDLWQWRKSL. Lys246 participates in a covalent cross-link: Glycyl lysine isopeptide (Lys-Gly) (interchain with G-Cter in SUMO1); alternate. Residues Lys246 and Lys248 each participate in a glycyl lysine isopeptide (Lys-Gly) (interchain with G-Cter in SUMO2); alternate cross-link. Lys248 carries the N6-acetyllysine; alternate modification. The residue at position 252 (Ser252) is a Phosphoserine. N6-acetyllysine; alternate is present on Lys255. Residue Lys255 forms a Glycyl lysine isopeptide (Lys-Gly) (interchain with G-Cter in SUMO1); alternate linkage. Residue Lys255 forms a Glycyl lysine isopeptide (Lys-Gly) (interchain with G-Cter in SUMO2); alternate linkage. Ser258 bears the Phosphoserine mark. Glycyl lysine isopeptide (Lys-Gly) (interchain with G-Cter in SUMO2); alternate cross-links involve residues Lys261, Lys265, and Lys271. A Glycyl lysine isopeptide (Lys-Gly) (interchain with G-Cter in SUMO); alternate cross-link involves residue Lys261. N6-acetyllysine; alternate occurs at positions 265 and 271. Lys265 is covalently cross-linked (Glycyl lysine isopeptide (Lys-Gly) (interchain with G-Cter in SUMO1); alternate). Position 265 is an N6-succinyllysine; alternate (Lys265). Thr277 is subject to Phosphothreonine. Lys290 bears the N6-acetyllysine mark.

The protein belongs to the nucleoplasmin family. Decamer formed by two pentameric rings associated in a head-to-head fashion. Disulfide-linked dimers under certain conditions. Interacts with NSUN2 and SENP3. The SWAP complex consists of NPM1, NCL, PARP1 and SWAP70. Interacts with the methylated form of RPS10. Interacts (via N-terminal domain) with APEX1; the interaction is RNA-dependent and decreases peroxide-damaged cells. Interacts with NEK2. Interacts with ROCK2 and BRCA2. Interacts with RPGR. Interacts with CENPW. Interacts with EIF2AK2/PKR. Interacts with DDX31; this interaction prevents interaction between NPM1 and HDM2. Interacts with MYC; competitive with NOP53. Interacts with NOP53; the interaction is direct and competitive with MYC. Interacts with LRRC34. Interacts with RRP1B. Interacts with NPM3. Interacts with ALKBH2. Interacts with TTF1 (via C-terminal region). Interacts with NOP2. Interacts with ARID3C (via REKLES DOMAIN); the interaction mediates ARID3C nuclear shuttling. Acetylated at C-terminal lysine residues, thereby increasing affinity to histones. In terms of processing, ADP-ribosylated. Post-translationally, phosphorylated at Ser-4 by PLK1 and PLK2. Phosphorylation at Ser-4 by PLK2 in S phase is required for centriole duplication and is sufficient to trigger centriole replication. Phosphorylation at Ser-4 by PLK1 takes place during mitosis. Phosphorylated by CDK2 at Ser-125 and Thr-198. Phosphorylation at Thr-198 may trigger initiation of centrosome duplication. Phosphorylated by CDK1 at Thr-198, Thr-217, Thr-232 and Thr-235 during cell mitosis. When these four sites are phosphorated, RNA-binding activity seem to be abolished. May be phosphorylated at Ser-70 by NEK2. The Thr-198 phosphorylated form has higher affinity for ROCK2. Sumoylated by ARF. In terms of processing, ubiquitinated. Ubiquitination leads to proteasomal degradation. Deubiquitinated by USP36. As to expression, expressed in B-cells that have been induced to switch to various Ig isotypes.

It localises to the nucleus. Its subcellular location is the nucleolus. The protein localises to the nucleoplasm. It is found in the cytoplasm. The protein resides in the cytoskeleton. It localises to the microtubule organizing center. Its subcellular location is the centrosome. Its function is as follows. Involved in diverse cellular processes such as ribosome biogenesis, centrosome duplication, protein chaperoning, histone assembly, cell proliferation, and regulation of tumor suppressors p53/TP53 and ARF. Binds ribosome presumably to drive ribosome nuclear export. Associated with nucleolar ribonucleoprotein structures and bind single-stranded nucleic acids. Acts as a chaperonin for the core histones H3, H2B and H4. Stimulates APEX1 endonuclease activity on apurinic/apyrimidinic (AP) double-stranded DNA but inhibits APEX1 endonuclease activity on AP single-stranded RNA. May exert a control of APEX1 endonuclease activity within nucleoli devoted to repair AP on rDNA and the removal of oxidized rRNA molecules. In concert with BRCA2, regulates centrosome duplication. Regulates centriole duplication: phosphorylation by PLK2 is able to trigger centriole replication. Negatively regulates the activation of EIF2AK2/PKR and suppresses apoptosis through inhibition of EIF2AK2/PKR autophosphorylation. Antagonizes the inhibitory effect of ATF5 on cell proliferation and relieves ATF5-induced G2/M blockade. In complex with MYC enhances the transcription of MYC target genes. May act as chaperonin or cotransporter in the nucleolar localization of transcription termination factor TTF1. In Mus musculus (Mouse), this protein is Nucleophosmin (Npm1).